The primary structure comprises 516 residues: Melianol synthase CYP71BQ17 (516 aa).

Residues 14–34 (MPHLPSLPVSLSFLLFFLMLV) form a helical membrane-spanning segment. Cysteine 454 lines the heme pocket.

It belongs to the cytochrome P450 family. Heme serves as cofactor. As to expression, mainly expressed in roots and, to a lesser extent, in stems and old leaves.

It is found in the membrane. It catalyses the reaction dihydroniloticin + 2 reduced [NADPH--hemoprotein reductase] + 2 O2 = melianol + 2 oxidized [NADPH--hemoprotein reductase] + 3 H2O + 2 H(+). Its pathway is secondary metabolite biosynthesis; terpenoid biosynthesis. Functionally, monooxygenase involved in the biosynthesis of quassinoids triterpene natural products such as ailanthone, chaparrinone, glaucarubinone and amarolide, allelopathic degraded triterpene lactones inhibiting the growth of other plants, and possessing antimalarial, antifeedant, insecticidal, anti-inflammatory and anticancer activities. Catalyzes the conversion of dihydroniloticin to the protolimonoid melianol. This Ailanthus altissima (Tree-of-heaven) protein is Melianol synthase CYP71BQ17.